Consider the following 242-residue polypeptide: Eukaryotic translation initiation factor 3 subunit J (242 aa).

Residues 1 to 10 are compositionally biased toward acidic residues; that stretch reads MASWDDEDFE. 3 disordered regions span residues 1–58, 71–97, and 201–242; these read MASW…KAQR, MKLK…MMNA, and REEK…DDFM. Low complexity predominate over residues 11-21; the sequence is VPAAATPAVPA. Over residues 23–38 the composition is skewed to acidic residues; the sequence is WDDDEEEDVMDSWDAE. A compositionally biased stretch (basic and acidic residues) spans 71 to 89; that stretch reads MKLKPEDASTKRDRQRQAE.

Belongs to the eIF-3 subunit J family. In terms of assembly, component of the eukaryotic translation initiation factor 3 (eIF-3) complex.

It is found in the cytoplasm. Functionally, component of the eukaryotic translation initiation factor 3 (eIF-3) complex, which is involved in protein synthesis of a specialized repertoire of mRNAs and, together with other initiation factors, stimulates binding of mRNA and methionyl-tRNAi to the 40S ribosome. The eIF-3 complex specifically targets and initiates translation of a subset of mRNAs involved in cell proliferation. This chain is Eukaryotic translation initiation factor 3 subunit J, found in Yarrowia lipolytica (strain CLIB 122 / E 150) (Yeast).